The sequence spans 334 residues: Anthranilate phosphoribosyltransferase (334 aa).

5-phospho-alpha-D-ribose 1-diphosphate contacts are provided by residues G79, 82-83 (GD), S87, 89-92 (NIST), 107-115 (KHGNRSISS), and S119. Anthranilate is bound at residue G79. Residue S91 participates in Mg(2+) binding. N110 is an anthranilate binding site. R165 serves as a coordination point for anthranilate. 2 residues coordinate Mg(2+): D224 and E225.

The protein belongs to the anthranilate phosphoribosyltransferase family. In terms of assembly, homodimer. Mg(2+) is required as a cofactor.

It catalyses the reaction N-(5-phospho-beta-D-ribosyl)anthranilate + diphosphate = 5-phospho-alpha-D-ribose 1-diphosphate + anthranilate. Its pathway is amino-acid biosynthesis; L-tryptophan biosynthesis; L-tryptophan from chorismate: step 2/5. Its function is as follows. Catalyzes the transfer of the phosphoribosyl group of 5-phosphorylribose-1-pyrophosphate (PRPP) to anthranilate to yield N-(5'-phosphoribosyl)-anthranilate (PRA). In Streptococcus sanguinis (strain SK36), this protein is Anthranilate phosphoribosyltransferase.